We begin with the raw amino-acid sequence, 244 residues long: Thiol S-methyltransferase TMT1B (244 aa).

An N-terminal signal peptide occupies residues 1-23 (MDVLVPLLQLLVLLLTLPLHLLA).

The protein belongs to the methyltransferase superfamily. As to expression, highly expressed in liver and kidney. No expression in testis, heart, lung, brain, spleen or cultured fibroblasts.

It localises to the endoplasmic reticulum membrane. The protein resides in the lipid droplet. Its subcellular location is the microsome. It is found in the cytoplasm. The protein localises to the cytosol. It carries out the reaction a thiol + S-adenosyl-L-methionine = a methyl thioether + S-adenosyl-L-homocysteine + H(+). Thiol S-methyltransferase that catalyzes the transfer of a methyl group from S-adenosyl-L-methionine to alkyl and phenolic thiol-containing acceptor substrates. Together with TMT1B accounts for most of S-thiol methylation activity in the endoplasmic reticulum of hepatocytes. Selectively methylates S-centered nucleophiles from metabolites such as hydrogen sulfide and dithiothreitol. In Rattus norvegicus (Rat), this protein is Thiol S-methyltransferase TMT1B (Tmt1b).